The chain runs to 346 residues: 3-dehydroquinate synthase (346 aa).

Residues 61 to 66, 95 to 99, 119 to 120, Lys132, and Lys141 each bind NAD(+); these read DGEAYK, GVIGD, and TT. Positions 174, 233, and 250 each coordinate Zn(2+).

The protein belongs to the sugar phosphate cyclases superfamily. Dehydroquinate synthase family. NAD(+) is required as a cofactor. Requires Co(2+) as cofactor. It depends on Zn(2+) as a cofactor.

The protein resides in the cytoplasm. It catalyses the reaction 7-phospho-2-dehydro-3-deoxy-D-arabino-heptonate = 3-dehydroquinate + phosphate. Its pathway is metabolic intermediate biosynthesis; chorismate biosynthesis; chorismate from D-erythrose 4-phosphate and phosphoenolpyruvate: step 2/7. Functionally, catalyzes the conversion of 3-deoxy-D-arabino-heptulosonate 7-phosphate (DAHP) to dehydroquinate (DHQ). The sequence is that of 3-dehydroquinate synthase from Wolinella succinogenes (strain ATCC 29543 / DSM 1740 / CCUG 13145 / JCM 31913 / LMG 7466 / NCTC 11488 / FDC 602W) (Vibrio succinogenes).